Reading from the N-terminus, the 246-residue chain is NH(3)-dependent NAD(+) synthetase (246 aa).

29-36 (GLSGGIDS) serves as a coordination point for ATP. Residue aspartate 35 coordinates Mg(2+). Arginine 110 contacts deamido-NAD(+). Threonine 130 contacts ATP. Mg(2+) is bound at residue glutamate 135. 2 residues coordinate ATP: lysine 159 and serine 181.

This sequence belongs to the NAD synthetase family. As to quaternary structure, homodimer.

It carries out the reaction deamido-NAD(+) + NH4(+) + ATP = AMP + diphosphate + NAD(+) + H(+). The protein operates within cofactor biosynthesis; NAD(+) biosynthesis; NAD(+) from deamido-NAD(+) (ammonia route): step 1/1. In terms of biological role, catalyzes the ATP-dependent amidation of deamido-NAD to form NAD. Uses ammonia as a nitrogen source. The protein is NH(3)-dependent NAD(+) synthetase of Campylobacter jejuni subsp. jejuni serotype O:6 (strain 81116 / NCTC 11828).